The chain runs to 205 residues: CASP-like protein 0U1 (205 aa).

The Cytoplasmic portion of the chain corresponds to 1 to 66 (MSGGDIDPTA…GYHKFAVFQF (66 aa)). Positions 10-162 (AINSPKFRLI…SMMFTWKEWR (153 aa)) constitute an MARVEL domain. A helical transmembrane segment spans residues 67 to 87 (LVVICVTYWLFTMLWMGMYLI). Over 88–90 (QKV) the chain is Extracellular. A helical membrane pass occupies residues 91–111 (PPAGTEFMIYAVFNVLILIAF). Residues 112–137 (STSWTECNETIVDPTYPVCKRATGAK) lie on the Cytoplasmic side of the membrane. The chain crosses the membrane as a helical span at residues 138-158 (ASIAFAMFTWLALCVSMMFTW). Topologically, residues 159 to 167 (KEWRDQNYE) are extracellular. A helical membrane pass occupies residues 168-188 (GLPIFGDFSSFMPGGGGGGMG). The Cytoplasmic segment spans residues 189 to 205 (GGGGYERPSDVNTQTYA).

Belongs to the Casparian strip membrane proteins (CASP) family. In terms of assembly, homodimer and heterodimers.

Its subcellular location is the cell membrane. The polypeptide is CASP-like protein 0U1 (Micromonas pusilla (strain CCMP1545) (Picoplanktonic green alga)).